The chain runs to 429 residues: Violacein synthase (429 aa).

3-21 (RAIIVGGGLAGGLTAIYLA) serves as a coordination point for FAD.

Requires FAD as cofactor.

The enzyme catalyses protoviolaceinate + NADPH + O2 + H(+) = violaceinate + NADP(+) + H2O. It carries out the reaction protoviolaceinate + NADH + O2 + H(+) = violaceinate + NAD(+) + H2O. It catalyses the reaction protodeoxyviolaceinate + NADPH + O2 + H(+) = deoxyviolaceinate + NADP(+) + H2O. The catalysed reaction is protodeoxyviolaceinate + NADH + O2 + H(+) = deoxyviolaceinate + NAD(+) + H2O. Its pathway is pigment biosynthesis; violacein biosynthesis. Catalyzes the hydroxylation of the 16-position of protoviolaceinate and protodeoxyviolaceinate to form violacein and deoxyviolacein, respectively. The sequence is that of Violacein synthase (vioC) from Chromobacterium violaceum (strain ATCC 12472 / DSM 30191 / JCM 1249 / CCUG 213 / NBRC 12614 / NCIMB 9131 / NCTC 9757 / MK).